The primary structure comprises 260 residues: Phosphoribosylaminoimidazole-succinocarboxamide synthase (260 aa).

The protein belongs to the SAICAR synthetase family.

It carries out the reaction 5-amino-1-(5-phospho-D-ribosyl)imidazole-4-carboxylate + L-aspartate + ATP = (2S)-2-[5-amino-1-(5-phospho-beta-D-ribosyl)imidazole-4-carboxamido]succinate + ADP + phosphate + 2 H(+). The protein operates within purine metabolism; IMP biosynthesis via de novo pathway; 5-amino-1-(5-phospho-D-ribosyl)imidazole-4-carboxamide from 5-amino-1-(5-phospho-D-ribosyl)imidazole-4-carboxylate: step 1/2. The polypeptide is Phosphoribosylaminoimidazole-succinocarboxamide synthase (Pelagibacter ubique (strain HTCC1062)).